The chain runs to 148 residues: Deoxyuridine 5'-triphosphate nucleotidohydrolase (148 aa).

Residues 68-70, Asn81, 85-87, and Lys95 each bind substrate; these read RSG and TID.

The protein belongs to the dUTPase family. Mg(2+) serves as cofactor.

The enzyme catalyses dUTP + H2O = dUMP + diphosphate + H(+). The protein operates within pyrimidine metabolism; dUMP biosynthesis; dUMP from dCTP (dUTP route): step 2/2. Its function is as follows. This enzyme is involved in nucleotide metabolism: it produces dUMP, the immediate precursor of thymidine nucleotides and it decreases the intracellular concentration of dUTP so that uracil cannot be incorporated into DNA. In Rickettsia felis (strain ATCC VR-1525 / URRWXCal2) (Rickettsia azadi), this protein is Deoxyuridine 5'-triphosphate nucleotidohydrolase.